Here is a 393-residue protein sequence, read N- to C-terminus: 2-nitroimidazole transporter (393 aa).

The Cytoplasmic segment spans residues 1 to 12 (MTCSTSLSGKNR). A helical membrane pass occupies residues 13-33 (IVLIAGILMIATTLRVTFTGA). The Periplasmic portion of the chain corresponds to 34 to 52 (APLLDTIRSAYSLTTAQTG). A helical membrane pass occupies residues 53-73 (LLTTLPLLAFALISPLAAPVA). Residues 74 to 80 (RRFGMER) are Cytoplasmic-facing. A run of 2 helical transmembrane segments spans residues 81 to 101 (SLFAALLLICAGIAIRSLPSP) and 102 to 122 (YLLFGGTAVIGGGIALGNVLL). Topologically, residues 123–140 (PGLIKRDFPHSVARLTGA) are cytoplasmic. A helical membrane pass occupies residues 141–161 (YSLTMGAAAALGSAMVVPLAL). Over 162-163 (NG) the chain is Periplasmic. The helical transmembrane segment at 164 to 184 (FGWQGALLMLMCFPLLALFLW) threads the bilayer. Topologically, residues 185-218 (LPQWRSQQHANLSTSRALHTRGIWRSPLAWQVTL) are cytoplasmic. The helical transmembrane segment at 219–239 (FLGINSLVYYVIIGWLPAILI) threads the bilayer. Residues 240 to 249 (SHGYSEAQAG) lie on the Periplasmic side of the membrane. A helical transmembrane segment spans residues 250 to 270 (SLHGLLQLATAAPGLLIPLFL). Over 271–278 (HHVKDQRG) the chain is Cytoplasmic. The chain crosses the membrane as a helical span at residues 279 to 299 (IAAFVALMCAVGAVGLCFMPA). Residues 300–304 (HAITW) are Periplasmic-facing. Residues 305-325 (TLLFGFGSGATMILGLTFIGL) form a helical membrane-spanning segment. Topologically, residues 326–334 (RASSAHQAA) are cytoplasmic. Residues 335–355 (ALSGMAQSVGYLLAACGPPLM) form a helical membrane-spanning segment. Residues 356–366 (GKIHDANGNWS) are Periplasmic-facing. The helical transmembrane segment at 367–387 (VPLMGVAILSLLMAIFGLCAG) threads the bilayer. The Cytoplasmic segment spans residues 388–393 (RDKEIR).

The protein belongs to the major facilitator superfamily. Cyanate porter (TC 2.A.1.17) family.

The protein resides in the cell inner membrane. Functionally, involved in efflux of 2-nitroimidazole. The chain is 2-nitroimidazole transporter from Escherichia coli (strain K12).